Here is a 695-residue protein sequence, read N- to C-terminus: ATP-dependent zinc metalloprotease FtsH (695 aa).

The Cytoplasmic segment spans residues 1–15; it reads MNNNKQPKQGNFVKN. The chain crosses the membrane as a helical span at residues 16–36; it reads ILMWVILAIVVVVGFNFFFSS. Residues 37–139 lie on the Extracellular side of the membrane; that stretch reads NQSSVDKISY…QASSSGMWVQ (103 aa). Residues 140 to 160 traverse the membrane as a helical segment; that stretch reads ILSYIIPMLLFVGIFWLMMGG. At 161–695 the chain is on the cytoplasmic side; the sequence is MGARGGGGGG…KEKSEDETAE (535 aa). An ATP-binding site is contributed by 233 to 240; it reads GPPGTGKT. H456 contacts Zn(2+). E457 is an active-site residue. Residues H460 and D532 each coordinate Zn(2+). A disordered region spans residues 657–695; that stretch reads KDANANVDDFSNINIYNGDEKTDSKPEENKEKSEDETAE. Basic and acidic residues predominate over residues 674-695; it reads GDEKTDSKPEENKEKSEDETAE.

This sequence in the central section; belongs to the AAA ATPase family. In the C-terminal section; belongs to the peptidase M41 family. As to quaternary structure, homohexamer. Requires Zn(2+) as cofactor.

It is found in the cell membrane. In terms of biological role, acts as a processive, ATP-dependent zinc metallopeptidase for both cytoplasmic and membrane proteins. Plays a role in the quality control of integral membrane proteins. This chain is ATP-dependent zinc metalloprotease FtsH, found in Lactococcus lactis subsp. lactis (strain IL1403) (Streptococcus lactis).